A 297-amino-acid chain; its full sequence is Non-homologous end-joining factor 1 (297 aa).

The tract at residues 1 to 131 (MDARLLQLPW…ATVSTVCRHL (131 aa)) is globular head. The tract at residues 220 to 286 (PKAPTHPKEE…LTHRPPAGAS (67 aa)) is C-terminal tail. Residues 222–297 (APTHPKEEDT…PKKKAKGLFM (76 aa)) form a disordered region. Residues 232-255 (GNSASHRPMAESSSISFEKTVPTQ) are compositionally biased toward polar residues. Residues 263–286 (VSEPSQVPQSSVSCLTHRPPAGAS) show a composition bias toward low complexity. The short motif at 287–297 (KPKKKAKGLFM) is the XLM element. The span at 287 to 297 (KPKKKAKGLFM) shows a compositional bias: basic residues.

This sequence belongs to the XRCC4-XLF family. XLF subfamily. As to quaternary structure, homodimer. Interacts with xrcc4; the interaction is direct and is mediated via a head-to-head interaction between N-terminal head regions. Component of the core long-range non-homologous end joining (NHEJ) complex (also named DNA-PK complex) composed of prkdc/DNA-PKcs, lig4, xrcc4, xrcc6/Ku70, xrcc5/Ku80 and nhej1/xlf.

The protein localises to the nucleus. DNA repair protein involved in DNA non-homologous end joining (NHEJ); required for double-strand break (DSB) repair and V(D)J recombination. It is also involved in telomere maintenance. Plays a key role in NHEJ by promoting the ligation of various mismatched and non-cohesive ends. In some studies, has been shown to associate with xrcc4 to form alternating helical filaments that bridge DNA and act like a bandage, holding together the broken DNA until it is repaired. Alternatively, it has also been shown that rather than forming filaments, a single nhej1 dimer interacts through both head domains with xrcc4 to promote the close alignment of DNA ends. The xrcc4-nhej1/xlf subcomplex binds to the DNA fragments of a DSB in a highly diffusive manner and robustly bridges two independent DNA molecules, holding the broken DNA fragments in close proximity to one other. The mobility of the bridges ensures that the ends remain accessible for further processing by other repair factors. The protein is Non-homologous end-joining factor 1 of Xenopus laevis (African clawed frog).